We begin with the raw amino-acid sequence, 61 residues long: Large ribosomal subunit protein bL32 (61 aa).

The tract at residues 1–20 (MAVQKSKPSRAKRGKRRSHD) is disordered. Residues 7–19 (KPSRAKRGKRRSH) show a composition bias toward basic residues.

The protein belongs to the bacterial ribosomal protein bL32 family.

The polypeptide is Large ribosomal subunit protein bL32 (Buchnera aphidicola subsp. Cinara cedri (strain Cc)).